The chain runs to 434 residues: Nicotinate phosphoribosyltransferase (434 aa).

The residue at position 242 (His242) is a Phosphohistidine; by autocatalysis.

It belongs to the NAPRTase family. Transiently phosphorylated on a His residue during the reaction cycle. Phosphorylation strongly increases the affinity for substrates and increases the rate of nicotinate D-ribonucleotide production. Dephosphorylation regenerates the low-affinity form of the enzyme, leading to product release.

The enzyme catalyses nicotinate + 5-phospho-alpha-D-ribose 1-diphosphate + ATP + H2O = nicotinate beta-D-ribonucleotide + ADP + phosphate + diphosphate. It participates in cofactor biosynthesis; NAD(+) biosynthesis; nicotinate D-ribonucleotide from nicotinate: step 1/1. Catalyzes the synthesis of beta-nicotinate D-ribonucleotide from nicotinate and 5-phospho-D-ribose 1-phosphate at the expense of ATP. In Rhizobium leguminosarum bv. trifolii (strain WSM2304), this protein is Nicotinate phosphoribosyltransferase.